We begin with the raw amino-acid sequence, 298 residues long: Putative cysteine protease YopT-like blr2058 (298 aa).

Over residues 1–14 (MYNRVDGEYAHTEQ) the composition is skewed to basic and acidic residues. 2 disordered regions span residues 1 to 25 (MYNR…ADGS) and 59 to 80 (SDAI…SSSS). Over residues 65-80 (SSNTSGLSTSSLSSSS) the composition is skewed to low complexity. Residue C109 is part of the active site. The segment covering 137–162 (NHRSAARRQEQSEKLKTQLKEDKAEG) has biased composition (basic and acidic residues). The segment at 137–166 (NHRSAARRQEQSEKLKTQLKEDKAEGSHNF) is disordered. Residues H223 and D238 contribute to the active site.

It belongs to the peptidase C58 family.

Potential cysteine protease, which may play a central role after invasion of host cell. This chain is Putative cysteine protease YopT-like blr2058, found in Bradyrhizobium diazoefficiens (strain JCM 10833 / BCRC 13528 / IAM 13628 / NBRC 14792 / USDA 110).